Reading from the N-terminus, the 193-residue chain is Ribonuclease HII (193 aa).

An RNase H type-2 domain is found at Tyr-15–Cys-193. Positions 21, 22, and 112 each coordinate a divalent metal cation.

The protein belongs to the RNase HII family. It depends on Mn(2+) as a cofactor. Requires Mg(2+) as cofactor.

The protein resides in the cytoplasm. The catalysed reaction is Endonucleolytic cleavage to 5'-phosphomonoester.. In terms of biological role, endonuclease that specifically degrades the RNA of RNA-DNA hybrids. The protein is Ribonuclease HII of Rickettsia typhi (strain ATCC VR-144 / Wilmington).